Here is a 540-residue protein sequence, read N- to C-terminus: Probable metabolite transport protein YFL040W (540 aa).

Residues 1–29 (MTAMKAIVWRLPKMPKIKITKTYEVTKIT) are Cytoplasmic-facing. A helical transmembrane segment spans residues 30 to 50 (AILTLVGFIMGLEVPSLATFL). Residues 51–67 (TNKTFNEYFKYPTPLQQ) are Extracellular-facing. N-linked (GlcNAc...) asparagine glycosylation is present at N52. A helical transmembrane segment spans residues 68–88 (GLLMGSTPLGGIMGCFICCIM). Residues 89–101 (NDRFSRIYQFQSG) lie on the Cytoplasmic side of the membrane. The chain crosses the membrane as a helical span at residues 102-122 (IIIWNIVTLLNFCIWDILGLL). Over 123 to 126 (ICRM) the chain is Extracellular. The helical transmembrane segment at 127-147 (IKGMILGNFSILVASYANEVI) threads the bilayer. Topologically, residues 148-158 (PRGKRGSTMSY) are cytoplasmic. Residues 159-179 (IQLCLTIGILVMHYLCIALSL) traverse the membrane as a helical segment. Over 180-187 (WDSHFAFR) the chain is Extracellular. The helical transmembrane segment at 188–208 (IAWCIGIIPGLLFWMASYALP) threads the bilayer. Over 209-275 (ESYHWLVLHG…KKLPRGSFKP (67 aa)) the chain is Cytoplasmic. A helical transmembrane segment spans residues 276–296 (LILGMTLQLLVQFSGINIILG). Residues 297–313 (YITYICEIVGLEGNVKL) are Extracellular-facing. The chain crosses the membrane as a helical span at residues 314–334 (FTSSIPYFINMVLSLLPITFI). The Cytoplasmic portion of the chain corresponds to 335-341 (DYTSRKL). The helical transmembrane segment at 342–362 (ITLLGGFPISGLLITIGALFV) threads the bilayer. The Extracellular portion of the chain corresponds to 363–385 (KYGQDTKPIDGNRSLVWSIGENP). N374 carries N-linked (GlcNAc...) asparagine glycosylation. Residues 386 to 406 (FVGGWILTLCFLIVGIFAMSL) form a helical membrane-spanning segment. The Cytoplasmic portion of the chain corresponds to 407–428 (SSIPWVYTNEMLPSRVKVKGFA). The helical transmembrane segment at 429–449 (ICVTFGWLGNFILTFLCPVMI) threads the bilayer. Over 450–455 (ERLKGT) the chain is Extracellular. A helical membrane pass occupies residues 456 to 476 (TFIIFGSLTFLISLSVLIWFP). Residues 477-540 (ETKGMSIEDI…KLKSDEEMII (64 aa)) lie on the Cytoplasmic side of the membrane. The disordered stretch occupies residues 499–540 (NLHGEKGIKTPDSNSNGGSTRSSQEGQLHKPIKLKSDEEMII). Residues 509-524 (PDSNSNGGSTRSSQEG) show a composition bias toward polar residues.

This sequence belongs to the major facilitator superfamily. Sugar transporter (TC 2.A.1.1) family.

The protein resides in the membrane. This Saccharomyces cerevisiae (strain ATCC 204508 / S288c) (Baker's yeast) protein is Probable metabolite transport protein YFL040W.